The sequence spans 293 residues: Glycine--tRNA ligase alpha subunit (293 aa).

It belongs to the class-II aminoacyl-tRNA synthetase family. As to quaternary structure, tetramer of two alpha and two beta subunits.

Its subcellular location is the cytoplasm. The enzyme catalyses tRNA(Gly) + glycine + ATP = glycyl-tRNA(Gly) + AMP + diphosphate. The sequence is that of Glycine--tRNA ligase alpha subunit from Oceanobacillus iheyensis (strain DSM 14371 / CIP 107618 / JCM 11309 / KCTC 3954 / HTE831).